The chain runs to 250 residues: Proteasome subunit alpha (250 aa).

It belongs to the peptidase T1A family. As to quaternary structure, the 20S proteasome core is composed of 14 alpha and 14 beta subunits that assemble into four stacked heptameric rings, resulting in a barrel-shaped structure. The two inner rings, each composed of seven catalytic beta subunits, are sandwiched by two outer rings, each composed of seven alpha subunits. The catalytic chamber with the active sites is on the inside of the barrel. Has a gated structure, the ends of the cylinder being occluded by the N-termini of the alpha-subunits. Is capped at one or both ends by the proteasome regulatory ATPase, PAN.

It localises to the cytoplasm. The formation of the proteasomal ATPase PAN-20S proteasome complex, via the docking of the C-termini of PAN into the intersubunit pockets in the alpha-rings, triggers opening of the gate for substrate entry. Interconversion between the open-gate and close-gate conformations leads to a dynamic regulation of the 20S proteasome proteolysis activity. Functionally, component of the proteasome core, a large protease complex with broad specificity involved in protein degradation. The sequence is that of Proteasome subunit alpha from Methanobrevibacter smithii (strain ATCC 35061 / DSM 861 / OCM 144 / PS).